The following is a 350-amino-acid chain: NADH-quinone oxidoreductase subunit H (350 aa).

The next 8 helical transmembrane spans lie at 5–25 (FIIEKSVVIVVVFAVTMIMAM), 76–96 (FLFVVGPAIAMSTALMTSAVI), 118–138 (IALLYIFGVLSVGVYGIMIGG), 162–182 (IAMGLSMIALLMMTGTMSLKV), 190–210 (MNWNVFYQPLSFLIFLICSFA), 243–263 (LFAEYASMFISSTIISVLFFG), 284–304 (LLGIAVLFVKICFFIFFYMWV), and 319–339 (LGWRILIPLSIINIMITGAVI).

It belongs to the complex I subunit 1 family. As to quaternary structure, NDH-1 is composed of 14 different subunits. Subunits NuoA, H, J, K, L, M, N constitute the membrane sector of the complex.

It is found in the cell inner membrane. The catalysed reaction is a quinone + NADH + 5 H(+)(in) = a quinol + NAD(+) + 4 H(+)(out). NDH-1 shuttles electrons from NADH, via FMN and iron-sulfur (Fe-S) centers, to quinones in the respiratory chain. The immediate electron acceptor for the enzyme in this species is believed to be ubiquinone. Couples the redox reaction to proton translocation (for every two electrons transferred, four hydrogen ions are translocated across the cytoplasmic membrane), and thus conserves the redox energy in a proton gradient. This subunit may bind ubiquinone. The sequence is that of NADH-quinone oxidoreductase subunit H from Flavobacterium johnsoniae (strain ATCC 17061 / DSM 2064 / JCM 8514 / BCRC 14874 / CCUG 350202 / NBRC 14942 / NCIMB 11054 / UW101) (Cytophaga johnsonae).